The sequence spans 351 residues: MALVSPGVSSRRSTNHCIFGAIEPFDSCVTYRSPCSSDASVDDGWFICDYHLKLRFKMSKMVLPIYDEDDNQYKRTIARHLVGHKERGVKRILVPTRANYMTVFNLPGMMLAEQLIFHLIYDNRLEVNRICASLKNNENFIDNTYSVVESVYSATRNILSLTDPQAYCSRVANDDVRFFDANVVDNNYQAGNGDTVFNNMPGFLRNLIRRAVAPETLQIDSEDLRLRNCNTCVINNTGLVATVTNTELYNPVRSSDIIKTRPNRLQIRNVLKFEGDTRALERTLGRYEEYPMYVPLFLGYQLVNLQNDILRANNFLPAPFGVPQAVNNLEAQAPAAPAPAAPAPAPAAPVV.

This sequence belongs to the baculoviridae p39 family.

The protein localises to the virion. The chain is Major capsid protein (P39) from Orgyia pseudotsugata (Douglas-fir tussock moth).